A 771-amino-acid chain; its full sequence is 5-methyltetrahydropteroyltriglutamate--homocysteine methyltransferase (771 aa).

Residues 16–19 and Lys-117 contribute to the 5-methyltetrahydropteroyltri-L-glutamate site; that span reads RELK. Residues 443–445 and Glu-496 each bind L-homocysteine; that span reads IGS. L-methionine is bound by residues 443–445 and Glu-496; that span reads IGS. 5-methyltetrahydropteroyltri-L-glutamate is bound by residues 527-528 and Trp-573; that span reads RC. Asp-611 is an L-homocysteine binding site. An L-methionine-binding site is contributed by Asp-611. Residue Glu-617 participates in 5-methyltetrahydropteroyltri-L-glutamate binding. 3 residues coordinate Zn(2+): His-653, Cys-655, and Glu-677. Residue His-706 is the Proton donor of the active site. Cys-738 lines the Zn(2+) pocket.

It belongs to the vitamin-B12 independent methionine synthase family. Zn(2+) serves as cofactor.

It catalyses the reaction 5-methyltetrahydropteroyltri-L-glutamate + L-homocysteine = tetrahydropteroyltri-L-glutamate + L-methionine. It participates in amino-acid biosynthesis; L-methionine biosynthesis via de novo pathway; L-methionine from L-homocysteine (MetE route): step 1/1. In terms of biological role, catalyzes the transfer of a methyl group from 5-methyltetrahydrofolate to homocysteine resulting in methionine formation. This chain is 5-methyltetrahydropteroyltriglutamate--homocysteine methyltransferase, found in Stutzerimonas stutzeri (strain A1501) (Pseudomonas stutzeri).